The chain runs to 293 residues: NAD-dependent protein deacetylase (293 aa).

Residues 5–282 enclose the Deacetylase sirtuin-type domain; the sequence is PAHDHHTLQD…LHAPPHLPRA (278 aa). Residues 27 to 47 and 105 to 108 contribute to the NAD(+) site; these read GAGCSTDSGIPDYRDLQGGWK and QNVD. The Proton acceptor role is filled by His-123. Cys-131, Cys-134, Cys-182, and Cys-185 together coordinate Zn(2+). NAD(+) is bound by residues 222 to 224, 248 to 250, and Cys-266; these read GSS and NFG.

Belongs to the sirtuin family. Class II subfamily. The cofactor is Zn(2+).

It localises to the cytoplasm. It catalyses the reaction N(6)-acetyl-L-lysyl-[protein] + NAD(+) + H2O = 2''-O-acetyl-ADP-D-ribose + nicotinamide + L-lysyl-[protein]. NAD-dependent protein deacetylase which modulates the activities of several enzymes which are inactive in their acetylated form. In Xanthomonas axonopodis pv. citri (strain 306), this protein is NAD-dependent protein deacetylase.